A 414-amino-acid chain; its full sequence is Gamma-glutamyl phosphate reductase (414 aa).

The protein belongs to the gamma-glutamyl phosphate reductase family.

The protein resides in the cytoplasm. It catalyses the reaction L-glutamate 5-semialdehyde + phosphate + NADP(+) = L-glutamyl 5-phosphate + NADPH + H(+). Its pathway is amino-acid biosynthesis; L-proline biosynthesis; L-glutamate 5-semialdehyde from L-glutamate: step 2/2. Functionally, catalyzes the NADPH-dependent reduction of L-glutamate 5-phosphate into L-glutamate 5-semialdehyde and phosphate. The product spontaneously undergoes cyclization to form 1-pyrroline-5-carboxylate. In Xanthomonas campestris pv. campestris (strain B100), this protein is Gamma-glutamyl phosphate reductase.